Consider the following 240-residue polypeptide: Protein MGARP (240 aa).

Topologically, residues 1–40 (MYLRRAVSKTLALPLRAPPNPAPLGKDASLRRMSSNRFPG) are cytoplasmic. Residues 41–63 (SSGSNMIYYLVVGVTVSAGGYYA) traverse the membrane as a helical; Anchor for type IV membrane protein segment. The Mitochondrial intermembrane portion of the chain corresponds to 64-240 (YKTVTSDQAK…VGSEAASAQG (177 aa)). The segment at 166 to 240 (RETTEVNPET…VGSEAASAQG (75 aa)) is disordered. Low complexity predominate over residues 170-181 (EVNPETTPEVTN). Positions 191–201 (DNDKDTTKNET) are enriched in basic and acidic residues. Acidic residues predominate over residues 202–213 (SDEYAELEEENS). The span at 228-240 (EASVGSEAASAQG) shows a compositional bias: low complexity.

As to quaternary structure, interacts with RHOT1/Miro-1, TRAK1/OIP106 and TRAK2/GRIF1. Interacts with RHOT2/Miro-2. In terms of tissue distribution, expressed in the brain, adrenal gland and corneal endothelium (CE). Expressed in steroid-producing cells of the ovary and testis (at protein level). Expressed in steroid-producing cells of the ovary and testis. Weakly expressed in placenta. Expressed in corneal endothelial cells.

It localises to the mitochondrion. The protein localises to the mitochondrion outer membrane. It is found in the mitochondrion inner membrane. In terms of biological role, plays a role in the trafficking of mitochondria along microtubules. Regulates the kinesin-mediated axonal transport of mitochondria to nerve terminals along microtubules during hypoxia. Participates in the translocation of TRAK2/GRIF1 from the cytoplasm to the mitochondrion. Also plays a role in steroidogenesis through maintenance of mitochondrial abundance and morphology. Plays an inhibitory role during neocortex development by regulating mitochondrial morphology, distribution and motility in neocortical neurons. The sequence is that of Protein MGARP (MGARP) from Homo sapiens (Human).